Reading from the N-terminus, the 141-residue chain is Large ribosomal subunit protein uL11 (141 aa).

It belongs to the universal ribosomal protein uL11 family. In terms of assembly, part of the ribosomal stalk of the 50S ribosomal subunit. Interacts with L10 and the large rRNA to form the base of the stalk. L10 forms an elongated spine to which L12 dimers bind in a sequential fashion forming a multimeric L10(L12)X complex. One or more lysine residues are methylated.

Functionally, forms part of the ribosomal stalk which helps the ribosome interact with GTP-bound translation factors. This is Large ribosomal subunit protein uL11 from Prochlorococcus marinus (strain MIT 9312).